The following is a 451-amino-acid chain: MATVAFHTLGCKVNHYETEAIWQLFKEAGYERRDFEQTADVYVINTCTVTNTGDKKSRQVIRRAIRQNPDGVICVTGCYAQTSPAEIMAIPGVDIVVGTQDREKMLGYIDQYREERQPINGVSNIMKARVYEELDVPAFTDRTRASLKIQEGCNNFCTFCIIPWARGLLRSRDPEEVIKQAQQLVDAGYKEIVLTGIHTGGYGEDMKDYNFAKLLSELDTRVEGVKRIRISSIEASQITDEVIEVLDRSDKIVNHLHIPIQSGSNTVLKRMRRKYTMEFFADRLNKLKKALPGLAVTSDVIVGFPGETEEEFMETYNFIKEHKFSELHVFPYSKRTGTPAARMEDQVDENVKNERVHRLIALSDQLAKEYASQYENEVLEIIPEEAFKETEEENMFVGYTDNYMKVVFKGTEDMIGKIVKVKILKAGYPYNEGQFVRVVEDEITEHMRLSS.

One can recognise an MTTase N-terminal domain in the interval 2 to 114; sequence ATVAFHTLGC…MLGYIDQYRE (113 aa). Cysteine 11, cysteine 47, cysteine 78, cysteine 153, cysteine 157, and cysteine 160 together coordinate [4Fe-4S] cluster. Residues 139–369 enclose the Radical SAM core domain; that stretch reads FTDRTRASLK…IALSDQLAKE (231 aa). The TRAM domain maps to 372-437; the sequence is SQYENEVLEI…YPYNEGQFVR (66 aa).

The protein belongs to the methylthiotransferase family. MtaB subfamily. It depends on [4Fe-4S] cluster as a cofactor.

The protein resides in the cytoplasm. The catalysed reaction is N(6)-L-threonylcarbamoyladenosine(37) in tRNA + (sulfur carrier)-SH + AH2 + 2 S-adenosyl-L-methionine = 2-methylsulfanyl-N(6)-L-threonylcarbamoyladenosine(37) in tRNA + (sulfur carrier)-H + 5'-deoxyadenosine + L-methionine + A + S-adenosyl-L-homocysteine + 2 H(+). Catalyzes the methylthiolation of N6-threonylcarbamoyladenosine (t(6)A), leading to the formation of 2-methylthio-N6-threonylcarbamoyladenosine (ms(2)t(6)A) at position 37 in tRNAs that read codons beginning with adenine. In Bacillus subtilis (strain 168), this protein is Threonylcarbamoyladenosine tRNA methylthiotransferase MtaB (mtaB).